Consider the following 284-residue polypeptide: Phosphatidylglycerol--prolipoprotein diacylglyceryl transferase (284 aa).

7 helical membrane-spanning segments follow: residues 18–38, 62–82, 106–126, 136–156, 190–210, 218–238, and 252–272; these read LGGI…VIAF, YFLW…VLIY, FVGI…IASY, LLIY…FGRI, PSQL…VLWA, GLLI…AEFY, and LSMG…ILLY. Arg-155 is an a 1,2-diacyl-sn-glycero-3-phospho-(1'-sn-glycerol) binding site.

This sequence belongs to the Lgt family.

The protein resides in the cell inner membrane. The catalysed reaction is L-cysteinyl-[prolipoprotein] + a 1,2-diacyl-sn-glycero-3-phospho-(1'-sn-glycerol) = an S-1,2-diacyl-sn-glyceryl-L-cysteinyl-[prolipoprotein] + sn-glycerol 1-phosphate + H(+). It participates in protein modification; lipoprotein biosynthesis (diacylglyceryl transfer). Its function is as follows. Catalyzes the transfer of the diacylglyceryl group from phosphatidylglycerol to the sulfhydryl group of the N-terminal cysteine of a prolipoprotein, the first step in the formation of mature lipoproteins. This chain is Phosphatidylglycerol--prolipoprotein diacylglyceryl transferase, found in Helicobacter pylori (strain G27).